The sequence spans 287 residues: Nitrogenase iron protein (287 aa).

An ATP-binding site is contributed by 8 to 15; it reads GKGGIGKS. C96 contributes to the [4Fe-4S] cluster binding site. An ADP-ribosylarginine; by dinitrogenase reductase ADP-ribosyltransferase modification is found at R99. Residue C130 participates in [4Fe-4S] cluster binding.

Belongs to the NifH/BchL/ChlL family. In terms of assembly, homodimer. [4Fe-4S] cluster is required as a cofactor. In terms of processing, the reversible ADP-ribosylation of Arg-99 inactivates the nitrogenase reductase and regulates nitrogenase activity.

It catalyses the reaction N2 + 8 reduced [2Fe-2S]-[ferredoxin] + 16 ATP + 16 H2O = H2 + 8 oxidized [2Fe-2S]-[ferredoxin] + 2 NH4(+) + 16 ADP + 16 phosphate + 6 H(+). The key enzymatic reactions in nitrogen fixation are catalyzed by the nitrogenase complex, which has 2 components: the iron protein and the molybdenum-iron protein. The polypeptide is Nitrogenase iron protein (Frankia casuarinae (strain DSM 45818 / CECT 9043 / HFP020203 / CcI3)).